The following is a 697-amino-acid chain: Probable translocation protein y4yR (697 aa).

A run of 8 helical transmembrane segments spans residues 20 to 40 (VALM…VMAV), 42 to 62 (ALIG…LYVS), 67 to 87 (FSSL…LTVA), 107 to 127 (SFVI…VTMV), 200 to 220 (SIAG…IGLL), 235 to 255 (LLTI…SITA), 293 to 313 (VAMG…AAVF), and 372 to 392 (IARI…PIPV). The disordered stretch occupies residues 675–697 (IRLPPSNGTSGEPRSIRPSATTG). Residues 680–697 (SNGTSGEPRSIRPSATTG) show a composition bias toward polar residues.

Belongs to the FHIPEP (flagella/HR/invasion proteins export pore) family.

The protein localises to the cell inner membrane. Its function is as follows. Could be involved in the secretion of an unknown factor. This Sinorhizobium fredii (strain NBRC 101917 / NGR234) protein is Probable translocation protein y4yR.